Consider the following 182-residue polypeptide: ATP synthase subunit delta (182 aa).

Belongs to the ATPase delta chain family. In terms of assembly, F-type ATPases have 2 components, F(1) - the catalytic core - and F(0) - the membrane proton channel. F(1) has five subunits: alpha(3), beta(3), gamma(1), delta(1), epsilon(1). F(0) has three main subunits: a(1), b(2) and c(10-14). The alpha and beta chains form an alternating ring which encloses part of the gamma chain. F(1) is attached to F(0) by a central stalk formed by the gamma and epsilon chains, while a peripheral stalk is formed by the delta and b chains.

It localises to the cell inner membrane. In terms of biological role, f(1)F(0) ATP synthase produces ATP from ADP in the presence of a proton or sodium gradient. F-type ATPases consist of two structural domains, F(1) containing the extramembraneous catalytic core and F(0) containing the membrane proton channel, linked together by a central stalk and a peripheral stalk. During catalysis, ATP synthesis in the catalytic domain of F(1) is coupled via a rotary mechanism of the central stalk subunits to proton translocation. Its function is as follows. This protein is part of the stalk that links CF(0) to CF(1). It either transmits conformational changes from CF(0) to CF(1) or is implicated in proton conduction. The protein is ATP synthase subunit delta of Histophilus somni (strain 2336) (Haemophilus somnus).